A 246-amino-acid chain; its full sequence is Octanoyltransferase (246 aa).

Residues 50–231 (PDTDDEIWVV…RLIAHLDGAT (182 aa)) form the BPL/LPL catalytic domain. Substrate-binding positions include 90–97 (RGGQITYH), 162–164 (ALG), and 175–177 (GLS). Cysteine 193 serves as the catalytic Acyl-thioester intermediate.

The protein belongs to the LipB family.

It is found in the cytoplasm. It carries out the reaction octanoyl-[ACP] + L-lysyl-[protein] = N(6)-octanoyl-L-lysyl-[protein] + holo-[ACP] + H(+). Its pathway is protein modification; protein lipoylation via endogenous pathway; protein N(6)-(lipoyl)lysine from octanoyl-[acyl-carrier-protein]: step 1/2. Its function is as follows. Catalyzes the transfer of endogenously produced octanoic acid from octanoyl-acyl-carrier-protein onto the lipoyl domains of lipoate-dependent enzymes. Lipoyl-ACP can also act as a substrate although octanoyl-ACP is likely to be the physiological substrate. This is Octanoyltransferase from Burkholderia pseudomallei (strain 1106a).